Reading from the N-terminus, the 542-residue chain is MNSNRSLLVMGLLLVSFLIFTQWQQDFNPEIQAQKQAQQQAQVASQSGDVPAASNANTVIAENATQGKTVTLESDVLRLTIDTLGGDVIASDLLAHNAELNSQTPFKLLQTGATTYVAQSGLVGKNGIDTNAGRPQYQVAQDTFVLAEGQNEMSVPMTFEKDGVLYTKTFVLKRGSYDVAVNFNVKNQTAATVEVQPYGQIKYTLLESSGSLTMPTYTGGAYSSAETNYKKYSFQDMEKANLDINTKAGWVALLQHYFVSAWVPNQDAENTIYSRTNNGIATIGYRGPVTTIAPNSEATITSQLWTGPKDQKEMEATAANLDLTVDYGWAWFIAKPLFALLTFIQSIVTNWGLAIIGVTIVVKTILYPLTKAQYTSMARMRMLQPKIQEMRERFGDDRQRMSQEMMKLYKEEKVNPMGGCLPILIQMPIFIALYWTFMEAVELRHAPFFGWIQDLSAQDPYYILPLLMGASMFLLQKMSPSPVTDPVQQKVMTFMPVMFTVFFLWFPSGLVLYWLTSNIITIVQQWLIYRNLEKKGLHSRKK.

Transmembrane regions (helical) follow at residues 7-27 (LLVMGLLLVSFLIFTQWQQDF), 338-358 (FALLTFIQSIVTNWGLAIIGV), 417-437 (MGGCLPILIQMPIFIALYWTF), 455-475 (LSAQDPYYILPLLMGASMFLL), and 494-514 (FMPVMFTVFFLWFPSGLVLYW).

It belongs to the OXA1/ALB3/YidC family. Type 1 subfamily. In terms of assembly, interacts with the Sec translocase complex via SecD. Specifically interacts with transmembrane segments of nascent integral membrane proteins during membrane integration.

The protein localises to the cell inner membrane. Its function is as follows. Required for the insertion and/or proper folding and/or complex formation of integral membrane proteins into the membrane. Involved in integration of membrane proteins that insert both dependently and independently of the Sec translocase complex, as well as at least some lipoproteins. Aids folding of multispanning membrane proteins. This Actinobacillus pleuropneumoniae serotype 3 (strain JL03) protein is Membrane protein insertase YidC.